The sequence spans 260 residues: 4-hydroxy-tetrahydrodipicolinate reductase (260 aa).

NAD(+) contacts are provided by residues 12–17, 92–94, and 118–121; these read GFRGKM, GTT, and APNF. The Proton donor/acceptor role is filled by His148. Residue His149 coordinates (S)-2,3,4,5-tetrahydrodipicolinate. Lys152 acts as the Proton donor in catalysis. A (S)-2,3,4,5-tetrahydrodipicolinate-binding site is contributed by 158-159; that stretch reads GT.

The protein belongs to the DapB family.

It is found in the cytoplasm. The catalysed reaction is (S)-2,3,4,5-tetrahydrodipicolinate + NAD(+) + H2O = (2S,4S)-4-hydroxy-2,3,4,5-tetrahydrodipicolinate + NADH + H(+). It catalyses the reaction (S)-2,3,4,5-tetrahydrodipicolinate + NADP(+) + H2O = (2S,4S)-4-hydroxy-2,3,4,5-tetrahydrodipicolinate + NADPH + H(+). It participates in amino-acid biosynthesis; L-lysine biosynthesis via DAP pathway; (S)-tetrahydrodipicolinate from L-aspartate: step 4/4. Catalyzes the conversion of 4-hydroxy-tetrahydrodipicolinate (HTPA) to tetrahydrodipicolinate. In Lactococcus lactis subsp. cremoris (strain SK11), this protein is 4-hydroxy-tetrahydrodipicolinate reductase.